The chain runs to 177 residues: Large ribosomal subunit protein uL6 (177 aa).

Belongs to the universal ribosomal protein uL6 family. As to quaternary structure, part of the 50S ribosomal subunit.

In terms of biological role, this protein binds to the 23S rRNA, and is important in its secondary structure. It is located near the subunit interface in the base of the L7/L12 stalk, and near the tRNA binding site of the peptidyltransferase center. This Methylococcus capsulatus (strain ATCC 33009 / NCIMB 11132 / Bath) protein is Large ribosomal subunit protein uL6.